The chain runs to 351 residues: Anthranilate phosphoribosyltransferase (351 aa).

Residues G80, 83 to 84 (GD), T88, 90 to 93 (NIST), 108 to 116 (KHGNRSVTS), and S120 each bind 5-phospho-alpha-D-ribose 1-diphosphate. G80 provides a ligand contact to anthranilate. S92 lines the Mg(2+) pocket. Anthranilate is bound at residue N111. R166 is an anthranilate binding site. Mg(2+) contacts are provided by D229 and E230.

This sequence belongs to the anthranilate phosphoribosyltransferase family. In terms of assembly, homodimer. It depends on Mg(2+) as a cofactor.

It carries out the reaction N-(5-phospho-beta-D-ribosyl)anthranilate + diphosphate = 5-phospho-alpha-D-ribose 1-diphosphate + anthranilate. It participates in amino-acid biosynthesis; L-tryptophan biosynthesis; L-tryptophan from chorismate: step 2/5. Catalyzes the transfer of the phosphoribosyl group of 5-phosphorylribose-1-pyrophosphate (PRPP) to anthranilate to yield N-(5'-phosphoribosyl)-anthranilate (PRA). This is Anthranilate phosphoribosyltransferase from Chlorobium phaeovibrioides (strain DSM 265 / 1930) (Prosthecochloris vibrioformis (strain DSM 265)).